We begin with the raw amino-acid sequence, 84 residues long: uncharacterized protein (84 aa).

Positions 34–54 (ATSTASSSAAKNTTSSSKNAA) are enriched in low complexity. Residues 34–57 (ATSTASSSAAKNTTSSSKNAAPGM) form a disordered region. N-linked (GlcNAc...) asparagine glycosylation occurs at Asn45. A helical transmembrane segment spans residues 66 to 83 (YGIIMAAFAAVSFVLGTG).

The protein localises to the endoplasmic reticulum membrane. This is an uncharacterized protein from Saccharomyces cerevisiae (strain ATCC 204508 / S288c) (Baker's yeast).